Consider the following 261-residue polypeptide: Short-chain-enoyl-CoA hydratase (261 aa).

Glu-114 serves as the catalytic Nucleophile. Residue Glu-134 is the Proton acceptor of the active site.

It belongs to the enoyl-CoA hydratase/isomerase family. In terms of assembly, homotetramer.

It catalyses the reaction a short-chain (3S)-3-hydroxyacyl-CoA = a short-chain (2E)-enoyl-CoA + H2O. It participates in lipid metabolism; butanoate metabolism. Its function is as follows. Catalyzes the reversible hydration of crotonyl-CoA. Can also use hexenoyl-CoA but not higher analogs. This is Short-chain-enoyl-CoA hydratase (crt) from Clostridium acetobutylicum (strain ATCC 824 / DSM 792 / JCM 1419 / IAM 19013 / LMG 5710 / NBRC 13948 / NRRL B-527 / VKM B-1787 / 2291 / W).